Consider the following 251-residue polypeptide: tRNA (guanine-N(7)-)-methyltransferase (251 aa).

Residues E80, E105, D132, and D155 each coordinate S-adenosyl-L-methionine. Residue D155 is part of the active site. Substrate-binding positions include K159, D191, and 228 to 231 (TKFE).

Belongs to the class I-like SAM-binding methyltransferase superfamily. TrmB family.

It carries out the reaction guanosine(46) in tRNA + S-adenosyl-L-methionine = N(7)-methylguanosine(46) in tRNA + S-adenosyl-L-homocysteine. Its pathway is tRNA modification; N(7)-methylguanine-tRNA biosynthesis. Catalyzes the formation of N(7)-methylguanine at position 46 (m7G46) in tRNA. In Histophilus somni (strain 2336) (Haemophilus somnus), this protein is tRNA (guanine-N(7)-)-methyltransferase.